The following is a 122-amino-acid chain: Large ribosomal subunit protein uL14 (122 aa).

Belongs to the universal ribosomal protein uL14 family. As to quaternary structure, part of the 50S ribosomal subunit. Forms a cluster with proteins L3 and L19. In the 70S ribosome, L14 and L19 interact and together make contacts with the 16S rRNA in bridges B5 and B8.

Functionally, binds to 23S rRNA. Forms part of two intersubunit bridges in the 70S ribosome. The sequence is that of Large ribosomal subunit protein uL14 from Rhodopirellula baltica (strain DSM 10527 / NCIMB 13988 / SH1).